Reading from the N-terminus, the 333-residue chain is Diacylglycerol acyltransferase/mycolyltransferase Ag85C (333 aa).

A signal peptide spans 1 to 44 (MKFLQQMRKLFGLAAKFPARLTIAVIGTALLAGLVGVVGDTAIA). 86–87 (LR) contacts substrate. The fibronectin-binding stretch occupies residues 102–112 (FEEYYHSGLSV). 2 residues coordinate substrate: serine 170 and asparagine 198. The active-site Nucleophile is the serine 170. Glutamate 274 is a catalytic residue. Residues 276 to 279 (LTLS) and 306 to 308 (HSW) contribute to the substrate site. Histidine 306 is a catalytic residue.

It belongs to the mycobacterial A85 antigen family. Homodimer.

The protein localises to the secreted. It carries out the reaction an acyl-CoA + a 1,2-diacyl-sn-glycerol = a triacyl-sn-glycerol + CoA. It catalyses the reaction 2 alpha,alpha'-trehalose 6-mycolate = alpha,alpha'-trehalose 6,6'-bismycolate + alpha,alpha-trehalose. Functionally, the antigen 85 proteins (FbpA, FbpB, FbpC) are responsible for the high affinity of mycobacteria to fibronectin, a large adhesive glycoprotein, which facilitates the attachment of M.tuberculosis to murine alveolar macrophages (AMs). They also help to maintain the integrity of the cell wall by catalyzing the transfer of mycolic acids to cell wall arabinogalactan and through the synthesis of alpha,alpha-trehalose dimycolate (TDM, cord factor). They catalyze the transfer of a mycoloyl residue from one molecule of alpha,alpha-trehalose monomycolate (TMM) to another TMM, leading to the formation of TDM. In Mycobacterium leprae (strain TN), this protein is Diacylglycerol acyltransferase/mycolyltransferase Ag85C (fbpC).